Reading from the N-terminus, the 199-residue chain is Recombination protein RecR (199 aa).

The segment at cysteine 56–cysteine 71 adopts a C4-type zinc-finger fold. Residues glutamate 79 to proline 174 form the Toprim domain.

The protein belongs to the RecR family.

In terms of biological role, may play a role in DNA repair. It seems to be involved in an RecBC-independent recombinational process of DNA repair. It may act with RecF and RecO. The polypeptide is Recombination protein RecR (Dechloromonas aromatica (strain RCB)).